Here is a 185-residue protein sequence, read N- to C-terminus: Ribosome-recycling factor (185 aa).

Belongs to the RRF family.

It localises to the cytoplasm. Functionally, responsible for the release of ribosomes from messenger RNA at the termination of protein biosynthesis. May increase the efficiency of translation by recycling ribosomes from one round of translation to another. The protein is Ribosome-recycling factor of Salinispora tropica (strain ATCC BAA-916 / DSM 44818 / JCM 13857 / NBRC 105044 / CNB-440).